We begin with the raw amino-acid sequence, 1088 residues long: RNA-directed RNA polymerase (1088 aa).

The 187-residue stretch at 501 to 687 (LSYGDVTRFL…AKRYIAGGKI (187 aa)) folds into the RdRp catalytic domain.

This sequence belongs to the reoviridae RNA-directed RNA polymerase family. Interacts with VP3 (Potential). Interacts with VP2; this interaction activates VP1. Interacts with NSP5; this interaction is probably necessary for the formation of functional virus factories. Interacts with NSP2; this interaction is weak. Requires Mg(2+) as cofactor.

Its subcellular location is the virion. The enzyme catalyses RNA(n) + a ribonucleoside 5'-triphosphate = RNA(n+1) + diphosphate. In terms of biological role, RNA-directed RNA polymerase that is involved in both transcription and genome replication. Together with VP3 capping enzyme, forms an enzyme complex positioned near the channels situated at each of the five-fold vertices of the core. Following infection, the outermost layer of the virus is lost, leaving a double-layered particle (DLP) made up of the core and VP6 shell. VP1 then catalyzes the transcription of fully conservative plus-strand genomic RNAs that are extruded through the DLP's channels into the cytoplasm where they function as mRNAs for translation of viral proteins. One copy of each of the viral (+)RNAs is also recruited during core assembly, together with newly synthesized polymerase complexes and VP2. The polymerase of these novo-formed particles catalyzes the synthesis of complementary minus-strands leading to dsRNA formation. To do so, the polymerase specifically recognizes and binds 4 bases 5'-UGUG-3' in the conserved 3'-sequence of plus-strand RNA templates. VP2 presumably activates the autoinhibited VP1-RNA complex to coordinate packaging and genome replication. Once dsRNA synthesis is complete, the polymerase switches to the transcriptional mode, thus providing secondary transcription. This chain is RNA-directed RNA polymerase, found in Rotavirus A (strain RVA/SA11-Patton/G3P[X]) (RV-A).